The following is a 1207-amino-acid chain: Histidine kinase 1 (1207 aa).

The span at methionine 1–isoleucine 10 shows a compositional bias: polar residues. A disordered region spans residues methionine 1–serine 20. At methionine 1–arginine 81 the chain is on the cytoplasmic side. Residues leucine 82 to phenylalanine 102 form a helical membrane-spanning segment. Residues threonine 103–threonine 446 lie on the Extracellular side of the membrane. A helical membrane pass occupies residues leucine 447–isoleucine 467. Residues leucine 468–alanine 1207 lie on the Cytoplasmic side of the membrane. The 259-residue stretch at asparagine 505–threonine 763 folds into the Histidine kinase domain. A Phosphohistidine; by autocatalysis modification is found at histidine 508. 2 disordered regions span residues aspartate 964–serine 987 and aspartate 1000–glutamate 1021. The span at serine 975–valine 984 shows a compositional bias: basic and acidic residues. Positions aspartate 1000–threonine 1014 are enriched in low complexity. The Response regulatory domain maps to arginine 1045 to threonine 1196. The residue at position 1127 (aspartate 1127) is a 4-aspartylphosphate.

As to quaternary structure, interacts with AHP2, depending of the phosphorylation state of Asp-1075 in the receiver domain, but probably not with AHP1 and AHP3. In terms of processing, autophosphorylated predominantly on His residues. Activation probably requires a transfer of a phosphate group between a His in the transmitter domain and an Asp of the receiver domain. In terms of tissue distribution, mostly expressed in roots, and, to a lower extent, in stems, leaves and flowers.

It is found in the cell membrane. The catalysed reaction is ATP + protein L-histidine = ADP + protein N-phospho-L-histidine.. In terms of biological role, functions as an osmosensor histidine kinase that detects water stress and transmits the stress signal to a downstream MAPK cascade. This protein undergoes an ATP-dependent autophosphorylation at a conserved histidine residue in the kinase core, and a phosphoryl group is then transferred to a conserved aspartate residue in the receiver domain. Positive regulator of drought and salt stress responses, and abscisic acid (ABA) signaling. Confers drought tolerance, probably by regulating levels of ABA accumulation. Plays a redundant role in regulating plant growth and development. Required for the regulation of desiccation processes during seed formation. The protein is Histidine kinase 1 (AHK1) of Arabidopsis thaliana (Mouse-ear cress).